The chain runs to 263 residues: 3-deoxy-manno-octulosonate cytidylyltransferase 1 (263 aa).

It belongs to the KdsB family.

The protein localises to the cytoplasm. It carries out the reaction 3-deoxy-alpha-D-manno-oct-2-ulosonate + CTP = CMP-3-deoxy-beta-D-manno-octulosonate + diphosphate. The protein operates within nucleotide-sugar biosynthesis; CMP-3-deoxy-D-manno-octulosonate biosynthesis; CMP-3-deoxy-D-manno-octulosonate from 3-deoxy-D-manno-octulosonate and CTP: step 1/1. Its pathway is bacterial outer membrane biogenesis; lipopolysaccharide biosynthesis. Its function is as follows. Activates KDO (a required 8-carbon sugar) for incorporation into bacterial lipopolysaccharide in Gram-negative bacteria. This Burkholderia ambifaria (strain MC40-6) protein is 3-deoxy-manno-octulosonate cytidylyltransferase 1.